Reading from the N-terminus, the 352-residue chain is Keratocan (352 aa).

The first 20 residues, 1 to 20 (MAGTICFIMWVLFITDTVWS), serve as a signal peptide directing secretion. An LRRNT domain is found at 33–71 (DDWTIHDFECPMECFCPPSFPTALYCENRGLKEIPAIPS). Cystine bridges form between cysteine 42/cysteine 48 and cysteine 46/cysteine 58. LRR repeat units follow at residues 72–93 (RIWYLYLQNNLIETIPEKPFEN), 96–117 (QLRWINLNKNKITNYGIEKGAL), 122–142 (KLLFLFLEDNELEEVPSPLPR), 143–164 (SLEQLQLARNKVSRIPQGTFSN), 167–180 (NLTLLDLQNNKLVD), 193–213 (NLMQLNMAKNALRNMPPRLPA), 214–235 (NTMQLFLDNNSIEGIPENYFNV), 238–258 (KVAFLRLNHNKLSDEGLPSRG), 263–282 (SILDLQLSHNQLTKVPRISA), and 283–304 (HLQHLHLDHNKIKSVNVSVICP). A glycan (N-linked (GlcNAc...) (keratan sulfate) asparagine) is linked at asparagine 93. Asparagine 167 carries N-linked (GlcNAc...) (keratan sulfate) asparagine glycosylation. Asparagine 222 is a glycosylation site (N-linked (GlcNAc...) asparagine). The N-linked (GlcNAc...) asparagine glycan is linked to asparagine 298. Cysteine 303 and cysteine 343 are oxidised to a cystine.

It belongs to the small leucine-rich proteoglycan (SLRP) family. SLRP class II subfamily. Binds keratan sulfate chains. In terms of tissue distribution, cornea (at protein level). Increased expression in the stroma of keratoconus corneas. Also detected in trachea, and in low levels, in intestine, skeletal muscle, ovary, lung and putamen.

It localises to the secreted. It is found in the extracellular space. The protein localises to the extracellular matrix. In terms of biological role, may be important in developing and maintaining corneal transparency and for the structure of the stromal matrix. In Homo sapiens (Human), this protein is Keratocan (KERA).